The sequence spans 268 residues: Glucosamine-6-phosphate deaminase (268 aa).

Catalysis depends on D67, which acts as the Proton acceptor; for enolization step. N137 functions as the For ring-opening step in the catalytic mechanism. The active-site Proton acceptor; for ring-opening step is the H139. E144 serves as the catalytic For ring-opening step.

The protein belongs to the glucosamine/galactosamine-6-phosphate isomerase family. NagB subfamily. As to quaternary structure, homohexamer.

The catalysed reaction is alpha-D-glucosamine 6-phosphate + H2O = beta-D-fructose 6-phosphate + NH4(+). It participates in amino-sugar metabolism; N-acetylneuraminate degradation; D-fructose 6-phosphate from N-acetylneuraminate: step 5/5. In terms of biological role, catalyzes the reversible isomerization-deamination of glucosamine 6-phosphate (GlcN6P) to form fructose 6-phosphate (Fru6P) and ammonium ion. The polypeptide is Glucosamine-6-phosphate deaminase (Pseudoalteromonas translucida (strain TAC 125)).